Consider the following 734-residue polypeptide: Alpha-catulin (734 aa).

Residues serine 374 and serine 538 each carry the phosphoserine modification.

This sequence belongs to the vinculin/alpha-catenin family. In terms of assembly, interacts with ARHGEF1. Interacts with DTNA. The interaction is required for correct localization of both CTNL1 and DTNA. As to expression, widely expressed. Expressed at lower level in neural tissues and at the highest level in the adrenal gland.

It is found in the cytoplasm. The protein localises to the cytoskeleton. The protein resides in the cell membrane. Its function is as follows. May modulate the Rho pathway signaling by providing a scaffold for the Lbc Rho guanine nucleotide exchange factor (ARHGEF1). This is Alpha-catulin (CTNNAL1) from Homo sapiens (Human).